The primary structure comprises 4699 residues: PKS-NRPS hybrid synthetase cheA (4699 aa).

Acidic residues predominate over residues 1–21; the sequence is MSDNDDEWNGFSDDNGEDDGP. 2 disordered regions span residues 1–38 and 136–165; these read MSDN…WDVP and DGWR…HTQH. The segment covering 136-148 has biased composition (basic and acidic residues); the sequence is DGWRFHSHPDPQH. The N-terminal acylcarrier protein transacylase domain (SAT) stretch occupies residues 172–520; it reads SLDTIAELSN…VQQNVEEMAK (349 aa). The interval 625-836 is disordered; that stretch reads PLPSVEDNVA…AGAPGARVTR (212 aa). Residues 674 to 688 are compositionally biased toward low complexity; that stretch reads TQGSQGSQGRRTPGS. Residues 724 to 737 show a composition bias toward basic residues; sequence PKRRGRPPGSKNKK. The 402-residue stretch at 737–1138 folds into the Ketosynthase family 3 (KS3) domain; it reads KKDQAPAPAE…GANAHAILEA (402 aa). Residues 764–777 are compositionally biased toward low complexity; it reads ASAPRRGLRAAPAA. The span at 802-816 shows a compositional bias: polar residues; that stretch reads ATASTPRAQSDQGTG. Residues Cys873, His1012, and His1058 each act as for beta-ketoacyl synthase activity in the active site. Residues 1250-1573 are malonyl-CoA:ACP transacylase (MAT) domain; that stretch reads VFTGQGAQWP…VGTLLRQRDA (324 aa). The tract at residues 1644–1777 is N-terminal hotdog fold; sequence NELLGTRIMD…ANLIISLGEP (134 aa). Residues 1644–1947 form the PKS/mFAS DH domain; sequence NELLGTRIMD…TKPLVPPTPS (304 aa). Residues 1645-1941 are dehydratase (DH) domain; the sequence is ELLGTRIMDN…QLQGLHTKPL (297 aa). His1676 functions as the Proton acceptor; for dehydratase activity in the catalytic mechanism. The interval 1794–1947 is C-terminal hotdog fold; it reads MLDVPAERFY…TKPLVPPTPS (154 aa). Asp1854 (proton donor; for dehydratase activity) is an active-site residue. Positions 2050–2241 are methyltransferase (MT) domain; it reads LNRFYIEALG…RNTGFSGADE (192 aa). The segment at 2794 to 2967 is ketoreductase (KR) domain; that stretch reads TYWLVGLTGG…PAAAVNIGAV (174 aa). Residues 3076–3153 form the Carrier 1 domain; it reads DASEILEDAY…ALFELVKERA (78 aa). Ser3113 bears the O-(pantetheine 4'-phosphoryl)serine mark. The tract at residues 3164–3265 is disordered; that stretch reads EQPDQVKSPR…PVASSPDAGL (102 aa). 2 stretches are compositionally biased toward polar residues: residues 3200–3209 and 3218–3233; these read SLDQGSSWDS and GHDS…SSPI. The segment at 3268 to 3696 is condensation (C) domain; the sequence is SVPLSFSQAR…PISRISKPPL (429 aa). The adenylation (A) domain stretch occupies residues 3730-4113; sequence IQAHPDKLAL…GGLILEGRID (384 aa). In terms of domain architecture, Carrier 2 spans 4236–4316; the sequence is EGLPAMQHLI…TMAALVASGS (81 aa). The interval 4241-4313 is thiolation and peptide carrier (T) domain; the sequence is MQHLIKQLWE…TLETMAALVA (73 aa). Ser4276 bears the O-(pantetheine 4'-phosphoryl)serine mark. Positions 4367–4598 are reductase (R) domain; it reads LTGSTGFLGR…ISVHTVAAAI (232 aa).

It in the C-terminal section; belongs to the NRP synthetase family.

It participates in secondary metabolite biosynthesis. In terms of biological role, PKS-NRPS hybrid synthetase; part of the gene cluster that mediates the biosynthesis of chaetoglobosin A which has a unique inhibitory activity against actin polymerization in mammalian cells. Chaetoglobosin A and its intermediates are involved in the morphological differentiation of C.globosum. The first step of the pathway is the synthesis of prochaetoglobosin I via condensation of one acetyl-CoA, 8 malonyl-CoA, and a L-tryptophan molecule by the PKS-NRPS hybrid synthetase cheA, followed by reduction of backbone double bond to install desired geometry by the enoyl reductase cheB. Further multiple oxidation steps performed by the cytochrome P450 monooxygenases cheE and cheG, as well as by the FAD-linked oxidoreductase cheF, lead to the formation of chaetoglobosin A. Depending on the order of action of these reductases, distinct intermediates can be identified. Within the pathway, the cytochrome P450 monooxygenase cheE catalyzes a stereospecific epoxidation on prochaetoglobosin I, cytoglobosin D, and chaetoglobosin J intermediates. The FAD-linked oxidoreductase cheF performs dehydrogenation of the C-20 hydroxyl groups in the 20-dihyrochaetoglobosin A and cytoglobosin D intermediates. Finally, the cytochrome P450 monooxygenase cheG can catalyze the stereospecific dihydroxylation of prochaetoglobosin I and prochaetoglobosin IV at C-19 and C-20, respectively. The Diels-Alderase cheD may play a role in the post-PKS-NRPS biosynthetic steps catalyzing Diels-Alder cyclization. The protein is PKS-NRPS hybrid synthetase cheA of Chaetomium globosum (strain ATCC 6205 / CBS 148.51 / DSM 1962 / NBRC 6347 / NRRL 1970) (Soil fungus).